Reading from the N-terminus, the 233-residue chain is Transcriptional regulatory protein WalR (233 aa).

One can recognise a Response regulatory domain in the interval 4–117 (KVVVVDDEKP…ELIARVKANL (114 aa)). Asp53 carries the 4-aspartylphosphate modification. Residues 132–231 (TNEITIKDIV…RRGVGYFLQQ (100 aa)) constitute a DNA-binding region (ompR/PhoB-type).

Phosphorylated by WalK.

It localises to the cytoplasm. Its function is as follows. Member of the two-component regulatory system WalK/WalR. In Staphylococcus haemolyticus (strain JCSC1435), this protein is Transcriptional regulatory protein WalR (walR).